We begin with the raw amino-acid sequence, 398 residues long: Elongation factor Tu (398 aa).

A tr-type G domain is found at 10–207; the sequence is KPHVNIGTIG…TVDSYIPEPE (198 aa). Residues 19–26 form a G1 region; that stretch reads GHVDHGKT. A GTP-binding site is contributed by 19-26; the sequence is GHVDHGKT. Thr26 lines the Mg(2+) pocket. A G2 region spans residues 63–67; it reads GITIN. The interval 84–87 is G3; that stretch reads DAPG. GTP-binding positions include 84–88 and 139–142; these read DAPGH and NKVD. The G4 stretch occupies residues 139–142; that stretch reads NKVD. The G5 stretch occupies residues 177–179; that stretch reads SAL.

It belongs to the TRAFAC class translation factor GTPase superfamily. Classic translation factor GTPase family. EF-Tu/EF-1A subfamily. Monomer.

The protein localises to the cytoplasm. The catalysed reaction is GTP + H2O = GDP + phosphate + H(+). Its function is as follows. GTP hydrolase that promotes the GTP-dependent binding of aminoacyl-tRNA to the A-site of ribosomes during protein biosynthesis. The chain is Elongation factor Tu from Streptococcus equi subsp. zooepidemicus (strain MGCS10565).